A 356-amino-acid polypeptide reads, in one-letter code: Heme A synthase (356 aa).

5 helical membrane-spanning segments follow: residues 24-44 (IAIWLLICCALVFAMIVVGGV), 106-126 (FHRLLGRLIGLVYFIPFVYFM), 139-159 (LLGIFALGALQGLMGWYMVMS), 174-194 (AHLGLAFVIYAAMFWVATGLI), and 214-234 (AWMLTGLIFVMVLSGGLVAGI). A heme-binding site is contributed by His276. 3 consecutive transmembrane segments (helical) span residues 278–298 (LIAWLLIFSIPWFWFKAKQLS), 309–329 (LLLLMLLIQAGLGITTLLLSV), and 331–351 (LTFATAHQAGAVLLFTAALWV). Residue His337 coordinates heme.

This sequence belongs to the COX15/CtaA family. Type 2 subfamily. In terms of assembly, interacts with CtaB. Requires heme b as cofactor.

The protein localises to the cell membrane. The enzyme catalyses Fe(II)-heme o + 2 A + H2O = Fe(II)-heme a + 2 AH2. The protein operates within porphyrin-containing compound metabolism; heme A biosynthesis; heme A from heme O: step 1/1. Catalyzes the conversion of heme O to heme A by two successive hydroxylations of the methyl group at C8. The first hydroxylation forms heme I, the second hydroxylation results in an unstable dihydroxymethyl group, which spontaneously dehydrates, resulting in the formyl group of heme A. The protein is Heme A synthase of Nitrosomonas eutropha (strain DSM 101675 / C91 / Nm57).